The sequence spans 507 residues: Glycosyltransferase family 92 protein C33H5.2 (507 aa).

The helical transmembrane segment at 6–26 (VILVFCASFALFFTFIIFGRY) threads the bilayer. The GT92 domain occupies 155–444 (RDVVMCIAPL…LKCYNEKFYD (290 aa)).

Belongs to the glycosyltransferase 92 family.

The protein localises to the membrane. The protein is Glycosyltransferase family 92 protein C33H5.2 of Caenorhabditis elegans.